Here is a 787-residue protein sequence, read N- to C-terminus: Integrin beta-6 (787 aa).

A signal peptide spans 1–21 (MGIELLCLFFLFLGRNDHVQG). The region spanning 22-71 (GCAMGGAETCEDCLLIGPQCAWCSQENFTHLSGVGERCDTPANLLAKGCQ) is the PSI domain. At 22-708 (GCAMGGAETC…KDCPKPPNIP (687 aa)) the chain is on the extracellular side. 19 cysteine pairs are disulfide-bonded: cysteine 23–cysteine 41, cysteine 31–cysteine 454, cysteine 34–cysteine 59, cysteine 44–cysteine 70, cysteine 197–cysteine 204, cysteine 252–cysteine 293, cysteine 394–cysteine 406, cysteine 426–cysteine 452, cysteine 456–cysteine 476, cysteine 467–cysteine 479, cysteine 481–cysteine 490, cysteine 492–cysteine 519, cysteine 502–cysteine 517, cysteine 511–cysteine 522, cysteine 524–cysteine 537, cysteine 539–cysteine 560, cysteine 544–cysteine 558, cysteine 552–cysteine 563, and cysteine 565–cysteine 574. 2 N-linked (GlcNAc...) asparagine glycosylation sites follow: asparagine 48 and asparagine 97. One can recognise a VWFA domain in the interval 131–371 (YPVDLYYLMD…QLIISAYEEL (241 aa)). Positions 140, 142, and 144 each coordinate Mg(2+). Residues serine 144, aspartate 147, aspartate 148, and glutamate 179 each coordinate Ca(2+). The Ca(2+) site is built by asparagine 235, aspartate 237, proline 239, and glutamate 240. Glutamate 240 is a Mg(2+) binding site. Asparagine 260 is a glycosylation site (N-linked (GlcNAc...) asparagine). The Ca(2+) site is built by aspartate 271 and lysine 355. Residue asparagine 387 is glycosylated (N-linked (GlcNAc...) asparagine). Asparagine 418 is a glycosylation site (N-linked (GlcNAc...) asparagine). I-EGF domains follow at residues 456-491 (CQKE…HHCE), 492-538 (CGED…PYCQ), 539-575 (CDNF…EYCN), and 576-615 (CTTS…PACE). Asparagine 463 and asparagine 471 each carry an N-linked (GlcNAc...) asparagine glycan. Residue asparagine 541 is glycosylated (N-linked (GlcNAc...) asparagine). A glycan (N-linked (GlcNAc...) asparagine) is linked at asparagine 575. 9 cysteine pairs are disulfide-bonded: cysteine 576–cysteine 599, cysteine 583–cysteine 597, cysteine 591–cysteine 602, cysteine 604–cysteine 614, cysteine 617–cysteine 620, cysteine 624–cysteine 670, cysteine 630–cysteine 649, cysteine 633–cysteine 645, and cysteine 678–cysteine 701. A helical membrane pass occupies residues 709 to 729 (MIMLGVSLAILLIGVALLCIW). The interaction with HAX1 stretch occupies residues 730–757 (KLLVSFHDRKEVAKFEAERSKAKWQTGT). The Cytoplasmic portion of the chain corresponds to 730–787 (KLLVSFHDRKEVAKFEAERSKAKWQTGTNPLYRGSTSTFKNVTYKHKEKQKVDLSTDG).

It belongs to the integrin beta chain family. Heterodimer of an alpha and a beta subunit. Interacts with FLNB. Interacts with HAX1. ITGAV:ITGB6 interacts with FBN1. ITGAV:ITGB6 interacts with TGFB1.

Its subcellular location is the cell membrane. It is found in the cell junction. The protein resides in the focal adhesion. Integrin alpha-V:beta-6 (ITGAV:ITGB6) is a receptor for fibronectin and cytotactin. It recognizes the sequence R-G-D in its ligands. ITGAV:ITGB6 acts as a receptor for fibrillin-1 (FBN1) and mediates R-G-D-dependent cell adhesion to FBN1. Integrin alpha-V:beta-6 (ITGAV:ITGB6) mediates R-G-D-dependent release of transforming growth factor beta-1 (TGF-beta-1) from regulatory Latency-associated peptide (LAP), thereby playing a key role in TGF-beta-1 activation. The sequence is that of Integrin beta-6 (ITGB6) from Ovis aries (Sheep).